The following is a 311-amino-acid chain: Methionyl-tRNA formyltransferase (311 aa).

110 to 113 (SLLP) lines the (6S)-5,6,7,8-tetrahydrofolate pocket.

This sequence belongs to the Fmt family.

The enzyme catalyses L-methionyl-tRNA(fMet) + (6R)-10-formyltetrahydrofolate = N-formyl-L-methionyl-tRNA(fMet) + (6S)-5,6,7,8-tetrahydrofolate + H(+). Functionally, attaches a formyl group to the free amino group of methionyl-tRNA(fMet). The formyl group appears to play a dual role in the initiator identity of N-formylmethionyl-tRNA by promoting its recognition by IF2 and preventing the misappropriation of this tRNA by the elongation apparatus. The protein is Methionyl-tRNA formyltransferase of Streptococcus pneumoniae (strain JJA).